The sequence spans 138 residues: uncharacterized protein (138 aa).

A DNA-binding region (H-T-H motif) is located at residues 17-38 (LCRNDVAHEAGTNNVQIMRIEK).

This is an uncharacterized protein from Herpetosiphon aurantiacus (Herpetosiphon giganteus).